The primary structure comprises 218 residues: Ribose-5-phosphate isomerase A (218 aa).

Substrate is bound by residues 28–31 (TGST), 81–84 (DGAD), and 94–97 (KGGG). Glutamate 103 (proton acceptor) is an active-site residue. A substrate-binding site is contributed by lysine 121.

This sequence belongs to the ribose 5-phosphate isomerase family. Homodimer.

It catalyses the reaction aldehydo-D-ribose 5-phosphate = D-ribulose 5-phosphate. It functions in the pathway carbohydrate degradation; pentose phosphate pathway; D-ribose 5-phosphate from D-ribulose 5-phosphate (non-oxidative stage): step 1/1. In terms of biological role, catalyzes the reversible conversion of ribose-5-phosphate to ribulose 5-phosphate. This Psychromonas ingrahamii (strain DSM 17664 / CCUG 51855 / 37) protein is Ribose-5-phosphate isomerase A.